The chain runs to 150 residues: Dual specificity protein phosphatase 23 (150 aa).

Positions 7–150 (NFSWVLPGRL…AVFQFYQRTK (144 aa)) constitute a Tyrosine-protein phosphatase domain. The active-site Phosphocysteine intermediate is C95.

Belongs to the protein-tyrosine phosphatase family. Non-receptor class dual specificity subfamily. In terms of tissue distribution, widely expressed. Highly expressed in spleen, prostate, colon, adrenal gland, mammary gland, thyroid and trachea. Expressed at lower level in uterus, small intestine, bladder, bone marrow, brain, spinal cord and stomach.

The protein localises to the cytoplasm. Its subcellular location is the cytosol. It localises to the nucleus. It carries out the reaction O-phospho-L-tyrosyl-[protein] + H2O = L-tyrosyl-[protein] + phosphate. It catalyses the reaction O-phospho-L-seryl-[protein] + H2O = L-seryl-[protein] + phosphate. The enzyme catalyses O-phospho-L-threonyl-[protein] + H2O = L-threonyl-[protein] + phosphate. Protein phosphatase that mediates dephosphorylation of proteins phosphorylated on Tyr and Ser/Thr residues. In vitro, it can dephosphorylate p44-ERK1 (MAPK3) but not p54 SAPK-beta (MAPK10) in vitro. Able to enhance activation of JNK and p38 (MAPK14). The protein is Dual specificity protein phosphatase 23 (DUSP23) of Homo sapiens (Human).